Reading from the N-terminus, the 202-residue chain is MTERSNNRQSQIYNFIKSQIKQKGYPPSVREICTAVGLKSTSTVHSYLEKLERRGFIKRDATKSRTIEVIEKSQKKEMIEVPIIGTITAGMPIIAVENIEDYFPLPMDYIKNKREIFMLRVKGESMVDAGILDGDLSLIEKVHSAENGDIVVALIENEATLKRFFKEENHIRLQPENKNMPPIIVDDCKIIGRLIGIYRQYE.

Residues 29 to 49 constitute a DNA-binding region (H-T-H motif); that stretch reads VREICTAVGLKSTSTVHSYLE. Residues serine 125 and lysine 162 each act as for autocatalytic cleavage activity in the active site.

Belongs to the peptidase S24 family. Homodimer.

It catalyses the reaction Hydrolysis of Ala-|-Gly bond in repressor LexA.. Functionally, represses a number of genes involved in the response to DNA damage (SOS response), including recA and lexA. In the presence of single-stranded DNA, RecA interacts with LexA causing an autocatalytic cleavage which disrupts the DNA-binding part of LexA, leading to derepression of the SOS regulon and eventually DNA repair. This Clostridium kluyveri (strain NBRC 12016) protein is LexA repressor.